The chain runs to 316 residues: tRNA pseudouridine synthase B (316 aa).

Aspartate 47 (nucleophile) is an active-site residue.

The protein belongs to the pseudouridine synthase TruB family. Type 1 subfamily.

It carries out the reaction uridine(55) in tRNA = pseudouridine(55) in tRNA. Its function is as follows. Responsible for synthesis of pseudouridine from uracil-55 in the psi GC loop of transfer RNAs. The protein is tRNA pseudouridine synthase B of Aliivibrio fischeri (strain MJ11) (Vibrio fischeri).